The sequence spans 93 residues: Pyrimidine/purine nucleoside phosphorylase (93 aa).

The protein belongs to the nucleoside phosphorylase PpnP family.

It carries out the reaction a purine D-ribonucleoside + phosphate = a purine nucleobase + alpha-D-ribose 1-phosphate. The catalysed reaction is adenosine + phosphate = alpha-D-ribose 1-phosphate + adenine. The enzyme catalyses cytidine + phosphate = cytosine + alpha-D-ribose 1-phosphate. It catalyses the reaction guanosine + phosphate = alpha-D-ribose 1-phosphate + guanine. It carries out the reaction inosine + phosphate = alpha-D-ribose 1-phosphate + hypoxanthine. The catalysed reaction is thymidine + phosphate = 2-deoxy-alpha-D-ribose 1-phosphate + thymine. The enzyme catalyses uridine + phosphate = alpha-D-ribose 1-phosphate + uracil. It catalyses the reaction xanthosine + phosphate = alpha-D-ribose 1-phosphate + xanthine. Its function is as follows. Catalyzes the phosphorolysis of diverse nucleosides, yielding D-ribose 1-phosphate and the respective free bases. Can use uridine, adenosine, guanosine, cytidine, thymidine, inosine and xanthosine as substrates. Also catalyzes the reverse reactions. The chain is Pyrimidine/purine nucleoside phosphorylase from Cellvibrio japonicus (strain Ueda107) (Pseudomonas fluorescens subsp. cellulosa).